We begin with the raw amino-acid sequence, 360 residues long: DNA replication and repair protein RecF (360 aa).

30-37 (GQNGSGKT) provides a ligand contact to ATP.

The protein belongs to the RecF family.

The protein localises to the cytoplasm. The RecF protein is involved in DNA metabolism; it is required for DNA replication and normal SOS inducibility. RecF binds preferentially to single-stranded, linear DNA. It also seems to bind ATP. The polypeptide is DNA replication and repair protein RecF (Shewanella sp. (strain MR-4)).